The chain runs to 502 residues: MCGGRGGIWLALAAALLHVSLQGEFQRRLYKELVKNYNPLERPVANDSQPLTVYFSLSLLQIMDVDEKNQVLTTNIWLQMSWTDHYLQWNMSEYPGVKNVRFPDGQIWKPDILLYNSADERFDATFHTNVLVNASGHCQYLPPGIFKSSCYIDVRWFPFDVQQCKLKFGSWSYGGWSLDLQMQEADISSYIPNGEWDLMGIPGKRNEKFYECCKEPYPDVTYTVTMRRRTLYYGLNLLIPCVLISALALLVFLLPADSGEKISLGITVLLSLTVFMLLVAEIMPATSDSVPLIAQYFASTMIIVGLSVVVTVIVLRYHHHDPDGGKMPKWTRIILLNWCAWFLRMKRPGEDKVRPACQHKPRRCSLASVELSAGAGPPTSNGNLLYIGFRGLEGMHCAPTPDSGVVCGRLACSPTHDEHLMHGAHPSDGDPDLAKILEEVRYIANRFRCQDESEVICSEWKFAACVVDRLCLMAFSVFTIICTIGILMSAPNFVEAVSKDFA.

The signal sequence occupies residues 1-22; that stretch reads MCGGRGGIWLALAAALLHVSLQ. The Extracellular segment spans residues 23–233; it reads GEFQRRLYKE…VTMRRRTLYY (211 aa). Residues Arg-42 and Val-44 each coordinate Ca(2+). N-linked (GlcNAc...) asparagine glycans are attached at residues Asn-46, Asn-90, and Asn-133. Cys-150 and Cys-164 are joined by a disulfide. The Ca(2+) site is built by Ser-172 and Tyr-210. A disulfide bridge connects residues Cys-212 and Cys-213. 3 helical membrane-spanning segments follow: residues 234-254, 262-282, and 295-315; these read GLNL…VFLL, ISLG…VAEI, and QYFA…VIVL. Positions 260–267 are essential for TMEM35A/NACHO-mediated proper subunit assembly and trafficking to cell membrane; sequence EKISLGIT. Residues 316–469 lie on the Cytoplasmic side of the membrane; the sequence is RYHHHDPDGG…WKFAACVVDR (154 aa). Residues 470–490 traverse the membrane as a helical segment; that stretch reads LCLMAFSVFTIICTIGILMSA.

It belongs to the ligand-gated ion channel (TC 1.A.9) family. Acetylcholine receptor (TC 1.A.9.1) subfamily. Alpha-7/CHRNA7 sub-subfamily. In terms of assembly, homopentamer. Can also form heteropentamers with CHRNB2, mainly found in basal forebrain cholinergic neurons. Interacts with RIC3; which is required for proper folding and assembly. Interacts with LYPD6. Interacts with CANX. Glycosylations at Asn-46, Asn-90 and Asn-133 are essential for TMEM35A/NACHO-mediated proper subunit assembly and trafficking to the cell membrane. In terms of tissue distribution, expressed in neurons. Expressed in umbrella cells of urothelium (at protein level).

It is found in the postsynaptic cell membrane. The protein resides in the cell membrane. The enzyme catalyses Ca(2+)(in) = Ca(2+)(out). The catalysed reaction is K(+)(in) = K(+)(out). It catalyses the reaction Na(+)(in) = Na(+)(out). It carries out the reaction choline(out) = choline(in). The enzyme catalyses NH4(+)(in) = NH4(+)(out). The catalysed reaction is L-arginine(in) = L-arginine(out). It catalyses the reaction guanidine(out) = guanidine(in). Its activity is regulated as follows. Activated by a myriad of ligands such as acetylcholine, cytisine, nicotine, choline and epibatidine. Oligomeric amyloid-beta protein 42 activates specifially CHRNA7:CHRNB2 nAchRs. Activity is modulated by positive allosteric modulators (PAMs), such as flavonoids, with a wide range of chemical diversity, pharmacological sensitivity and efficacy. AChR activity is inhibited by the antagonists alpha-conotoxons RgIA, ImI and ImII, small disulfide-constrained peptides from cone snails. Alpha-conotoxin PnIC selectively inhibits CHRNA7:CHRNB2 over CHRNA7 homopentamer. In terms of biological role, component of neuronal acetylcholine receptors (nAChRs) that function as pentameric, ligand-gated cation channels with high calcium permeability among other activities. nAChRs are excitatory neurotrasnmitter receptors formed by a collection of nAChR subunits known to mediate synaptic transmission in the nervous system and the neuromuscular junction. Each nAchR subunit confers differential attributes to channel properties, including activation, deactivation and desensitization kinetics, pH sensitivity, cation permeability, and binding to allosteric modulators. CHRNA7 forms homopentameric neuronal acetylcholine receptors abundantly expressed in the central nervous system, characterized by fast desensitization and high calcium permeability. Also forms heteropentamers with CHRNB2, mainly expressed in basal forebrain cholinergic neurons. Involved in the modulation of calcium-dependent signaling pathways and influences the release of neurotransmitters, including dopamine, glutamate and GABA. Also expressed in non-neuronal cells such as immune cells like lymphocytes, monocytes and macrophages. In T cells, activation induces metabotropic signaling that results in an increase of intracellular Ca2+ concentrations, independent of ionotropic receptor functions. In macrophages, required for acetylcholine-mediated inhibition of TNF and other inflammatory cytokine release. Once activated by acetylcholine, nicotine or other agonists, selectively inhibits production of pro-inflammatory cytokines while leaving anti-inflammatory cytokines undisturbed. Stimulates the cholinergic anti-inflammatory pathway, controlling inflammation by inhibiting NFKB nuclear translocation and activating the JAK2-STAT3 pathway, independently of ion channel activity. Also expressed in the urothelium where it modulates reflex bladder activity by increasing intracellular calcium through internal stores and decreasing basal ATP release. In Rattus norvegicus (Rat), this protein is Neuronal acetylcholine receptor subunit alpha-7 (Chrna7).